The sequence spans 201 residues: UPF0301 protein Atu0781 (201 aa).

It belongs to the UPF0301 (AlgH) family.

This is UPF0301 protein Atu0781 from Agrobacterium fabrum (strain C58 / ATCC 33970) (Agrobacterium tumefaciens (strain C58)).